We begin with the raw amino-acid sequence, 72 residues long: Translation initiation factor IF-1 (72 aa).

The S1-like domain maps to 1–72; sequence MSKEDSIEVT…TKGRITFRHR (72 aa).

Belongs to the IF-1 family. Component of the 30S ribosomal translation pre-initiation complex which assembles on the 30S ribosome in the order IF-2 and IF-3, IF-1 and N-formylmethionyl-tRNA(fMet); mRNA recruitment can occur at any time during PIC assembly.

It is found in the cytoplasm. In terms of biological role, one of the essential components for the initiation of protein synthesis. Stabilizes the binding of IF-2 and IF-3 on the 30S subunit to which N-formylmethionyl-tRNA(fMet) subsequently binds. Helps modulate mRNA selection, yielding the 30S pre-initiation complex (PIC). Upon addition of the 50S ribosomal subunit IF-1, IF-2 and IF-3 are released leaving the mature 70S translation initiation complex. The chain is Translation initiation factor IF-1 from Solibacter usitatus (strain Ellin6076).